A 114-amino-acid chain; its full sequence is Histone H3-5 (114 aa).

The disordered stretch occupies residues 1–29; that stretch reads NTGAKAPRKQLANKAARKSTNVNAVSGVK.

The protein belongs to the histone H3 family. In terms of assembly, the nucleosome is a histone octamer containing two molecules each of H2A, H2B, H3 and H4 assembled in one H3-H4 heterotetramer and two H2A-H2B heterodimers. The octamer wraps approximately 147 bp of DNA.

It localises to the nucleus. Its subcellular location is the chromosome. In terms of biological role, core component of nucleosome. Nucleosomes wrap and compact DNA into chromatin, limiting DNA accessibility to the cellular machineries which require DNA as a template. Histones thereby play a central role in transcription regulation, DNA repair, DNA replication and chromosomal stability. DNA accessibility is regulated via a complex set of post-translational modifications of histones, also called histone code, and nucleosome remodeling. In Stylonychia lemnae (Ciliate), this protein is Histone H3-5 (H3-5).